The following is a 303-amino-acid chain: UDP-3-O-acyl-N-acetylglucosamine deacetylase (303 aa).

The Zn(2+) site is built by histidine 78, histidine 237, and aspartate 241. Catalysis depends on histidine 264, which acts as the Proton donor.

It belongs to the LpxC family. Zn(2+) is required as a cofactor.

The catalysed reaction is a UDP-3-O-[(3R)-3-hydroxyacyl]-N-acetyl-alpha-D-glucosamine + H2O = a UDP-3-O-[(3R)-3-hydroxyacyl]-alpha-D-glucosamine + acetate. Its pathway is glycolipid biosynthesis; lipid IV(A) biosynthesis; lipid IV(A) from (3R)-3-hydroxytetradecanoyl-[acyl-carrier-protein] and UDP-N-acetyl-alpha-D-glucosamine: step 2/6. Functionally, catalyzes the hydrolysis of UDP-3-O-myristoyl-N-acetylglucosamine to form UDP-3-O-myristoylglucosamine and acetate, the committed step in lipid A biosynthesis. The sequence is that of UDP-3-O-acyl-N-acetylglucosamine deacetylase from Pseudomonas savastanoi pv. phaseolicola (strain 1448A / Race 6) (Pseudomonas syringae pv. phaseolicola (strain 1448A / Race 6)).